Reading from the N-terminus, the 313-residue chain is MKVSVVVCTYSMERYESFSETVESVLAQTYEPLELVIVVDGNEEEFDRVQDDFGDIDDVVLHCNDENRGISYSRTKGAELGTGDVVAMIDDDATAEPDWIETLVDTYENNPDAVAVGGTVVPDWVARKPEFFPEEFYWLVGCDERGFGEHMEEVRNTYGSNISFKRDVFLEVGGYDTNTGRKGDKHVQAHEAPVCIRIYEQTGERVIYNKQARVNHKLFEYRTEFDWLVFRSFWQGYSKRVMDLLYPQASDDKNAYLKDLMLVYVVDRLKNLVEDPSLAQVQQLIAIFVFTAAVGFGYVYGLLTPNLVEKTNN.

A helical membrane pass occupies residues Leu-284–Thr-304.

This sequence belongs to the glycosyltransferase 2 family.

Its subcellular location is the cell membrane. The catalysed reaction is an archaeal dolichyl alpha-D-glucosyl phosphate + UDP-alpha-D-glucuronate = an archaeal dolichyl beta-D-glucuronosyl-(1-&gt;4)-alpha-D-glucosyl phosphate + UDP + H(+). It participates in cell surface structure biogenesis; S-layer biogenesis. In terms of biological role, involved in the protein N-glycosylation pathway responsible for the assembly and attachment of an N-linked pentasaccharide that decorates the S-layer glycoprotein and flagellins. Catalyzes the transfer of a glucuronate residue (GlcA) to a glucose residue already bound to a dolichol phosphate (DolP), a compound that serves as a glycan lipid carrier in Archaea. In vitro, is able to add GlcA to DolP-Glc in which the omega-position isoprene is not saturated. However, the likely physiological lipid substrate is alpha,omega-saturated. In Haloferax volcanii (strain ATCC 29605 / DSM 3757 / JCM 8879 / NBRC 14742 / NCIMB 2012 / VKM B-1768 / DS2) (Halobacterium volcanii), this protein is Glucosyl-dolichyl phosphate glucuronosyltransferase.